The primary structure comprises 554 residues: Bifunctional epoxide hydrolase 2 (554 aa).

The tract at residues 1–224 is phosphatase; sequence MALRVAAFDL…KVTGTQFPEA (224 aa). Mg(2+) is bound by residues Asp-9 and Asp-11. The residue at position 55 (Lys-55) is an N6-succinyllysine. 123–124 contributes to the phosphate binding site; that stretch reads TN. The residue at position 176 (Lys-176) is an N6-acetyllysine; alternate. Lys-176 is modified (N6-succinyllysine; alternate). Asp-185 contributes to the Mg(2+) binding site. 2 positions are modified to N6-acetyllysine: Lys-191 and Lys-215. The segment at 233 to 554 is epoxide hydrolase; the sequence is NDVSHGYVTV…IQNPSVTSKI (322 aa). The AB hydrolase-1 domain maps to 257–530; sequence PAICLCHGFP…CGHWTQIEKP (274 aa). The active-site Nucleophile is Asp-333. Ser-368 is subject to Phosphoserine. Residue Tyr-381 coordinates substrate. 2 positions are modified to N6-succinyllysine: Lys-420 and Lys-454. Tyr-465 (proton donor) is an active-site residue. Lys-504 bears the N6-succinyllysine mark. Cys-521 is lipidated: S-(15-deoxy-Delta12,14-prostaglandin J2-9-yl)cysteine. The active-site Proton acceptor is the His-523. Positions 552–554 match the Microbody targeting signal motif; the sequence is SKI. At Lys-553 the chain carries N6-succinyllysine.

It belongs to the AB hydrolase superfamily. Epoxide hydrolase family. In terms of assembly, homodimer. It depends on Mg(2+) as a cofactor. In terms of processing, the covalent modification of cysteine by 15-deoxy-Delta12,14-prostaglandin-J2 is autocatalytic and reversible. It may occur as an alternative to other cysteine modifications, such as S-nitrosylation and S-palmitoylation.

The protein resides in the cytoplasm. The protein localises to the peroxisome. The enzyme catalyses an epoxide + H2O = an ethanediol. It carries out the reaction (9S,10S)-10-hydroxy-9-(phosphooxy)octadecanoate + H2O = (9S,10S)-9,10-dihydroxyoctadecanoate + phosphate. The catalysed reaction is 8-hydroxy-(11S,12S)-epoxy-(5Z,9E,14Z)-eicosatrienoate + H2O = (8,11R,12S)-trihydroxy-(5Z,9E,14Z)-eicosatrienoate. It catalyses the reaction 10-hydroxy-(11S,12S)-epoxy- (5Z,8Z,14Z)-eicosatrienoate + H2O = (10,11S,12R)-trihydroxy-(5Z,8Z,14Z)-eicosatrienoate. The enzyme catalyses 12-phosphooxy-(9Z)-octadecenoate + H2O = 12-hydroxy-(9Z)-octadecenoate + phosphate. It carries out the reaction 12-phosphooxy-(9E)-octadecenoate + H2O = 12-hydroxy-(9E)-octadecenoate + phosphate. The catalysed reaction is 12-(phosphooxy)octadecanoate + H2O = 12-hydroxyoctadecanoate + phosphate. It catalyses the reaction 8,9-epoxy-(5Z,11Z,14Z)-eicosatrienoate + H2O = 8,9-dihydroxy-(5Z,11Z,14Z)-eicosatrienoate. The enzyme catalyses 11,12-epoxy-(5Z,8Z,14Z)-eicosatrienoate + H2O = 11,12-dihydroxy-(5Z,8Z,14Z)-eicosatrienoate. It carries out the reaction 14,15-epoxy-(5Z,8Z,11Z)-eicosatrienoate + H2O = 14,15-dihydroxy-(5Z,8Z,11Z)-eicosatrienoate. The catalysed reaction is 9,10-epoxy-(12Z)-octadecenoate + H2O = 9,10-dihydroxy-(12Z)-octadecenoate. It catalyses the reaction 1-tetradecanoyl-sn-glycerol 3-phosphate + H2O = 1-tetradecanoyl-sn-glycerol + phosphate. The enzyme catalyses 1-octadecanoyl-sn-glycero-3-phosphate + H2O = 1-octadecanoyl-sn-glycerol + phosphate. It carries out the reaction 1-(5Z,8Z,11Z,14Z-eicosatetraenoyl)-sn-glycero-3-phosphate + H2O = 1-(5Z,8Z,11Z,14Z-eicosatetraenoyl)-sn-glycerol + phosphate. The catalysed reaction is 1-hexadecanoyl-sn-glycero-3-phosphate + H2O = 1-hexadecanoyl-sn-glycerol + phosphate. It catalyses the reaction 1-(9Z-octadecenoyl)-sn-glycero-3-phosphate + H2O = 1-(9Z-octadecenoyl)-sn-glycerol + phosphate. The enzyme catalyses (8S,9R)-epoxy-(5Z,11Z,14Z)-eicosatrienoate + H2O = (8S,9S)-dihydroxy-(5Z,11Z,14Z)-eicosatrienoate. It carries out the reaction (11S,12R)-epoxy-(5Z,8Z,14Z)-eicosatrienoate + H2O = (11R,12R)-dihydroxy-(5Z,8Z,14Z)-eicosatrienoate. The catalysed reaction is (11S,12R)-epoxy-(5Z,8Z,14Z)-eicosatrienoate + H2O = (11S,12S)-dihydroxy-(5Z,8Z,14Z)-eicosatrienoate. It catalyses the reaction (14S,15R)-epoxy-(5Z,8Z,11Z)-eicosatrienoate + H2O = (14R,15R)-dihydroxy-(5Z,8Z,11Z)-eicosatrienoate. The enzyme catalyses (14S,15R)-epoxy-(5Z,8Z,11Z)-eicosatrienoate + H2O = (14S,15S)-dihydroxy-(5Z,8Z,11Z)-eicosatrienoate. It carries out the reaction (11R,12S)-epoxy-(5Z,8Z,14Z)-eicosatrienoate + H2O = (11S,12S)-dihydroxy-(5Z,8Z,14Z)-eicosatrienoate. The catalysed reaction is (11R,12S)-epoxy-(5Z,8Z,14Z)-eicosatrienoate + H2O = (11R,12R)-dihydroxy-(5Z,8Z,14Z)-eicosatrienoate. It catalyses the reaction (8S,9R)-epoxy-(5Z,11Z,14Z)-eicosatrienoate + H2O = (8R,9R)-dihydroxy-(5Z,11Z,14Z)-eicosatrienoate. The enzyme catalyses (14R,15S)-epoxy-(5Z,8Z,11Z)-eicosatrienoate + H2O = (14R,15R)-dihydroxy-(5Z,8Z,11Z)-eicosatrienoate. Inhibited by 1-(1-acetylpiperidin-4-yl)-3-(4-(trifl uoromethoxy)phenyl)urea (TPAU), 1-cyclohexyl-3-dodecylurea (CDU), 12-(3-adamantan-1-yl-ureido)-dodecanoic acid (AUDA), 1-((3S, 5S, 7S)-adamantan-1-yl)-3-(5-(2-(2-ethoxyethoxy) ethoxy)pentyl)urea (AEPU), N-adamantyl-N[']-cyclohexyl urea (ACU), 4-(((1S, 4S)-4-(3-((3S, 5S, 7S)-adamantan-1-yl) ureido)cyclohexyl)oxy)benzoic acid (c-AUCB), 4-(((1R, 4R)-4-(3-((3S, 5S, 7S)-adamantan-1-yl)ureido)cyclohexyl)oxy)benzoic acid (t-AUCB), 4-(((1R, 4R)-4-(3-(4(trifluoromethoxy)phenyl)ureido)cyclohexyl)oxy)benzoic acid (t-TAUCB) and to a lesser extent by 8-(3-((3S, 5S, 7S)-adamantan-1-yl)ureido) octanoic acid (AUOA). Phosphatase activity is inhibited by dodecyl-phosphate, phospholipids such as phospho-lysophosphatidic acids and fatty acids such as palmitic acid and lauric acid. In terms of biological role, bifunctional enzyme. The C-terminal domain has epoxide hydrolase activity and acts on epoxides (alkene oxides, oxiranes) and arene oxides. Plays a role in xenobiotic metabolism by degrading potentially toxic epoxides. Also determines steady-state levels of physiological mediators. The N-terminal domain has lipid phosphatase activity, with the highest activity towards threo-9,10-phosphonooxy-hydroxy-octadecanoic acid, followed by erythro-9,10-phosphonooxy-hydroxy-octadecanoic acid, 12-phosphonooxy-octadec-9Z-enoic acid and 12-phosphonooxy-octadec-9E-enoic acid. Functionally, bifunctional enzyme. The C-terminal domain has epoxide hydrolase activity and acts on epoxides (alkene oxides, oxiranes) and arene oxides. Plays a role in xenobiotic metabolism by degrading potentially toxic epoxides. Also determines steady-state levels of physiological mediators. Its function is as follows. Bifunctional enzyme. The N-terminal domain has lipid phosphatase activity, with the highest activity towards threo-9,10-phosphonooxy-hydroxy-octadecanoic acid, followed by erythro-9,10-phosphonooxy-hydroxy-octadecanoic acid, 12-phosphonooxy-octadec-9Z-enoic acid and 12-phosphonooxy-octadec-9E-enoic acid. Has phosphatase activity toward lyso-glycerophospholipids with also some lower activity toward lysolipids of sphingolipid and isoprenoid phosphates. The polypeptide is Bifunctional epoxide hydrolase 2 (Rattus norvegicus (Rat)).